We begin with the raw amino-acid sequence, 97 residues long: Meromycolate extension acyl carrier protein (97 aa).

The Carrier domain occupies 3 to 81 (ASQQEIIAGL…DVVAYIQKLE (79 aa)). Position 41 is an O-(pantetheine 4'-phosphoryl)serine (Ser41).

This sequence belongs to the acyl carrier protein (ACP) family. In terms of processing, 4'-phosphopantetheine is transferred from CoA to a specific serine of apo-AcpM.

It is found in the cytoplasm. Its function is as follows. Acyl carrier protein involved in meromycolate extension. The protein is Meromycolate extension acyl carrier protein (acpM) of Mycolicibacterium aurum (Mycobacterium aurum).